A 319-amino-acid polypeptide reads, in one-letter code: Zinc finger protein C19B12.07c (319 aa).

Residues 146 to 170 (FRCLCCHVPCKNKKLLREHMNNKRH) form a C2H2-type zinc finger.

Belongs to the ZNF277 family.

Its subcellular location is the nucleus. The protein is Zinc finger protein C19B12.07c of Schizosaccharomyces pombe (strain 972 / ATCC 24843) (Fission yeast).